We begin with the raw amino-acid sequence, 271 residues long: MAGPQQQPPYLHLAELTASQFLEIWKHFDADGNGYIEGKELENFFQELEKARKGSGMMSKSDNFGEKMKEFMQKYDKNSDGKIEMAELAQILPTEENFLLCFRQHVGSSAEFMEAWRKYDTDRSGYIEANELKGFLSDLLKKANRPYDEPKLQEYTQTILRMFDLNGDGKLGLSEMSRLLPVQENFLLKFQGMKLTSEEFNAIFTFYDKDGSGYIDENELDALLKDLYEKNKKEMNIQQLTTYRKSVMSLAEAGKLYRKDLEIVLCSEPPV.

EF-hand domains follow at residues 16 to 51 (LTASQFLEIWKHFDADGNGYIEGKELENFFQELEKA), 63 to 98 (NFGEKMKEFMQKYDKNSDGKIEMAELAQILPTEENF), 107 to 142 (GSSAEFMEAWRKYDTDRSGYIEANELKGFLSDLLKK), 151 to 186 (KLQEYTQTILRMFDLNGDGKLGLSEMSRLLPVQENF), 195 to 230 (LTSEEFNAIFTFYDKDGSGYIDENELDALLKDLYEK), and 235 to 270 (MNIQQLTTYRKSVMSLAEAGKLYRKDLEIVLCSEPP). Positions 29, 31, 33, 35, 40, 76, 78, 80, 82, 87, 120, 122, 124, 126, 131, 164, 166, 168, 170, 175, 208, 210, 212, 214, and 219 each coordinate Ca(2+). Tyrosine 214 bears the Phosphotyrosine mark.

Belongs to the calbindin family. In terms of tissue distribution, widely expressed in central nervous system. Expressed in type I unipolar brush cells of the cerebellum (at protein level).

It localises to the synapse. The protein resides in the cell projection. The protein localises to the dendrite. Its function is as follows. Calcium-binding protein involved in calcium homeostasis and signal transduction. It plays a critical role in buffering intracellular calcium levels and modulating calcium-dependent signaling pathways. Predominantly expressed in specific neuronal populations, influences synaptic plasticity and neuronal excitability, contributing to learning and memory. During embryonic development, it facilitates neuronal differentiation and maturation. This is Calretinin (Calb2) from Mus musculus (Mouse).